The sequence spans 293 residues: 4-diphosphocytidyl-2-C-methyl-D-erythritol kinase (293 aa).

Residue K16 is part of the active site. 99 to 109 contributes to the ATP binding site; it reads PMGAGLGGGSS. D141 is an active-site residue.

The protein belongs to the GHMP kinase family. IspE subfamily.

It carries out the reaction 4-CDP-2-C-methyl-D-erythritol + ATP = 4-CDP-2-C-methyl-D-erythritol 2-phosphate + ADP + H(+). It participates in isoprenoid biosynthesis; isopentenyl diphosphate biosynthesis via DXP pathway; isopentenyl diphosphate from 1-deoxy-D-xylulose 5-phosphate: step 3/6. Functionally, catalyzes the phosphorylation of the position 2 hydroxy group of 4-diphosphocytidyl-2C-methyl-D-erythritol. This is 4-diphosphocytidyl-2-C-methyl-D-erythritol kinase from Burkholderia cenocepacia (strain ATCC BAA-245 / DSM 16553 / LMG 16656 / NCTC 13227 / J2315 / CF5610) (Burkholderia cepacia (strain J2315)).